We begin with the raw amino-acid sequence, 810 residues long: Type I restriction enzyme EcoAI endonuclease subunit (810 aa).

The Helicase ATP-binding domain maps to 183–343 (EAVSNGQNRV…TDYFGDPVYV (161 aa)). 197 to 203 (ATGTGKT) serves as a coordination point for ATP. Residues 412–575 (TITDYLKRTN…DIADPESDFE (164 aa)) form the Helicase C-terminal domain. A compositionally biased stretch (acidic residues) spans 578–588 (LEEISEHDEEQ). The tract at residues 578–608 (LEEISEHDEEQVTGVDEPPAPPYQVTDTDDV) is disordered.

Belongs to the HsdR family. In terms of assembly, the type I restriction/modification system is composed of three polypeptides R, M and S. The restriction enzyme has stoichiometry R(2)M(2)S(1) while the methyltransferase is M(2)S(1).

It catalyses the reaction Endonucleolytic cleavage of DNA to give random double-stranded fragments with terminal 5'-phosphates, ATP is simultaneously hydrolyzed.. Its function is as follows. The subtype B restriction (R) subunit of a type I restriction enzyme that recognizes 5'-GAGN(7)GTCA-3' and cleaves a random distance away. Subunit R is required for both nuclease and ATPase activities, but not for modification. After locating a non-methylated recognition site, the enzyme complex serves as a molecular motor that translocates DNA in an ATP-dependent manner until a collision occurs that triggers cleavage. The chain is Type I restriction enzyme EcoAI endonuclease subunit from Escherichia coli.